The sequence spans 239 residues: tRNA (guanine-N(1)-)-methyltransferase (239 aa).

Residues Gly108 and 127 to 132 (IGDYVL) each bind S-adenosyl-L-methionine.

The protein belongs to the RNA methyltransferase TrmD family. In terms of assembly, homodimer.

Its subcellular location is the cytoplasm. The catalysed reaction is guanosine(37) in tRNA + S-adenosyl-L-methionine = N(1)-methylguanosine(37) in tRNA + S-adenosyl-L-homocysteine + H(+). Specifically methylates guanosine-37 in various tRNAs. This is tRNA (guanine-N(1)-)-methyltransferase from Lactobacillus helveticus (strain DPC 4571).